The following is a 141-amino-acid chain: VLSDKDKTNVKATWSKVGDHASDYVAEALERMFFSFPTTKTYFPHFDLSHGSGQVKGHGKKVGEALTQAVGHLDDLPSALSALSDLHAHKLRVDPVNFKLLSHCLLVTLSSHQPTEFTPEVHASLDKFLSNVSTVLTSKYR.

Residues 1-141 enclose the Globin domain; sequence VLSDKDKTNV…VSTVLTSKYR (141 aa). Phosphoserine is present on Ser3. N6-succinyllysine is present on Lys7. Thr8 bears the Phosphothreonine mark. An N6-succinyllysine modification is found at Lys11. Lys16 bears the N6-acetyllysine; alternate mark. At Lys16 the chain carries N6-succinyllysine; alternate. Phosphotyrosine is present on Tyr24. Residue Ser35 is modified to Phosphoserine. The residue at position 40 (Lys40) is an N6-succinyllysine. Ser49 is subject to Phosphoserine. Position 58 (His58) interacts with O2. His87 contacts heme b. Ser102 bears the Phosphoserine mark. Position 108 is a phosphothreonine (Thr108). Ser124 is subject to Phosphoserine. 2 positions are modified to phosphothreonine: Thr134 and Thr137. Ser138 bears the Phosphoserine mark.

The protein belongs to the globin family. In terms of assembly, heterotetramer of two alpha chains and two beta chains. Red blood cells.

Its function is as follows. Involved in oxygen transport from the lung to the various peripheral tissues. Functionally, hemopressin acts as an antagonist peptide of the cannabinoid receptor CNR1. Hemopressin-binding efficiently blocks cannabinoid receptor CNR1 and subsequent signaling. In Elephas maximus (Indian elephant), this protein is Hemoglobin subunit alpha (HBA).